The primary structure comprises 53 residues: uncharacterized protein (53 aa).

The next 2 membrane-spanning stretches (helical) occupy residues 3–22 and 26–45; these read LFGMIFLIATVAFILLGVLL and AFFFVSILTLIAAIVLFTVL.

The protein localises to the cell membrane. This is an uncharacterized protein from Bacillus subtilis (strain 168).